The chain runs to 388 residues: Beta-1,4-galactosyltransferase 5 (388 aa).

Topologically, residues 1 to 14 (MRVRRGLLRLPRRS) are cytoplasmic. Residues 15 to 35 (LLAALFFFSLSSSLLYFVYVA) traverse the membrane as a helical; Signal-anchor for type II membrane protein segment. At 36-388 (PGIVNTYLFM…TPELAQVTEY (353 aa)) the chain is on the lumenal side. Residues Asn-77, Asn-81, Asn-90, Asn-111, and Asn-128 are each glycosylated (N-linked (GlcNAc...) asparagine). Cysteines 114 and 158 form a disulfide. UDP-alpha-D-galactose contacts are provided by residues 169–173 (PFRNR), 208–210 (FNR), 235–236 (VD), Tyr-264, and Trp-296. Cys-229 and Cys-248 are joined by a disulfide. Mn(2+) is bound at residue Asp-236. Position 298 to 301 (298 to 301 (GEDD)) interacts with N-acetyl-D-glucosamine. 329-330 (YH) is a binding site for UDP-alpha-D-galactose. Arg-340 is a binding site for N-acetyl-D-glucosamine. N-linked (GlcNAc...) asparagine glycosylation is found at Asn-364 and Asn-373.

It belongs to the glycosyltransferase 7 family. As to quaternary structure, (Microbial infection) Interacts with porcine reproductive and respiratory syndrome virus GP5. Mn(2+) serves as cofactor.

The protein resides in the golgi apparatus. The protein localises to the golgi stack membrane. It carries out the reaction a beta-D-glucosyl-(1&lt;-&gt;1')-N-acylsphing-4-enine + UDP-alpha-D-galactose = a beta-D-Gal-(1-&gt;4)-beta-D-Glc-(1&lt;-&gt;1)-Cer(d18:1(4E)) + UDP + H(+). The protein operates within protein modification; protein glycosylation. Its pathway is sphingolipid metabolism. Its function is as follows. Catalyzes the synthesis of lactosylceramide (LacCer) via the transfer of galactose from UDP-galactose to glucosylceramide (GlcCer). LacCer is the starting point in the biosynthesis of all gangliosides (membrane-bound glycosphingolipids) which play pivotal roles in the CNS including neuronal maturation and axonal and myelin formation. Plays a role in the glycosylation of BMPR1A and regulation of its protein stability. Essential for extraembryonic development during early embryogenesis. In terms of biological role, (Microbial infection) May play a role in the glycosylation of porcine reproductive and respiratory syndrome virus GP5 protein and may be involved in the regulation of viral proliferation. This chain is Beta-1,4-galactosyltransferase 5 (B4GALT5), found in Sus scrofa (Pig).